The chain runs to 1012 residues: RNA-binding protein 26 (1012 aa).

Residue lysine 94 forms a Glycyl lysine isopeptide (Lys-Gly) (interchain with G-Cter in SUMO2) linkage. Positions leucine 98–serine 127 form a coiled coil. Lysine 106 participates in a covalent cross-link: Glycyl lysine isopeptide (Lys-Gly) (interchain with G-Cter in SUMO1); alternate. A Glycyl lysine isopeptide (Lys-Gly) (interchain with G-Cter in SUMO2); alternate cross-link involves residue lysine 106. Residues lysine 106–lysine 118 are compositionally biased toward basic and acidic residues. Residues lysine 106–serine 236 are disordered. A Phosphoserine modification is found at serine 127. Residues arginine 134–arginine 168 are compositionally biased toward basic and acidic residues. Residues tyrosine 169–serine 186 show a composition bias toward basic residues. Composition is skewed to basic and acidic residues over residues tryptophan 187 to arginine 201 and arginine 209 to proline 227. The C3H1-type zinc finger occupies proline 288–aspartate 316. Over residues glutamine 334–glutamine 388 the composition is skewed to pro residues. Disordered stretches follow at residues glutamine 334–proline 404 and isoleucine 465–arginine 520. Positions alanine 394–proline 404 are enriched in low complexity. Serine 501 carries the phosphoserine modification. At lysine 515 the chain carries N6-acetyllysine. Serine 523 carries the post-translational modification Phosphoserine. The 75-residue stretch at threonine 537–glutamate 611 folds into the RRM 1 domain. At serine 621 the chain carries Phosphoserine. Positions proline 647–glutamine 667 are disordered. 2 coiled-coil regions span residues aspartate 724 to serine 800 and lysine 828 to lysine 852. Residues serine 858 to alanine 889 are disordered. The segment covering arginine 862–glycine 882 has biased composition (basic residues). One can recognise an RRM 2 domain in the interval arginine 896–proline 965. Residues serine 970–arginine 1012 are disordered. Residues aspartate 973–asparagine 1005 show a composition bias toward acidic residues.

Expressed in testis and ovary.

Its function is as follows. May be involved in the turnover of nuclear polyadenylated (pA+) RNA. This chain is RNA-binding protein 26, found in Mus musculus (Mouse).